The sequence spans 512 residues: Sodium/proline symporter (512 aa).

The next 13 helical transmembrane spans lie at 16–36 (WQTYIMIAVYFLILIVIGFYG), 54–74 (IGPYITALSAGASDMSGWMIM), 85–105 (LSAMWITIGLTLGAYINYFVV), 139–159 (IISGLIIVVFFTLYTHSGFVS), 174–194 (FGLILVAFIVIFYTFFGGYLA), 200–220 (FFQGVIMLIAMVMVPIVAMMN), 240–260 (LFKGLSFIGTISLFSWGLGYF), 286–306 (ISWMAVGLLGAVAVGLTGIAF), 327–347 (VLFHPLVGGFLLAAILAAIMS), 381–401 (FVMIGRLSVLVVAIVAIAIAW), 410–430 (LVGNAWAGFGASFSPLVLFAL), 438–458 (AGAVSGMVSGALVVIVWIAWI), and 467–487 (IFGLYEIIPGFIVSVIVTYVV).

The protein belongs to the sodium:solute symporter (SSF) (TC 2.A.21) family.

The protein localises to the cell membrane. It catalyses the reaction L-proline(in) + Na(+)(in) = L-proline(out) + Na(+)(out). Catalyzes the sodium-dependent uptake of extracellular L-proline. Since most S.aureus strains are L-proline auxotrophs, this transporter may aid the bacterial persistence during an infection of tissues with low proline concentrations. This Staphylococcus aureus (strain bovine RF122 / ET3-1) protein is Sodium/proline symporter (putP).